A 184-amino-acid polypeptide reads, in one-letter code: Interferon alpha-1 (184 aa).

The signal sequence occupies residues Met1–Gly23. Disulfide bonds link Cys24–Cys122 and Cys52–Cys162.

The protein belongs to the alpha/beta interferon family. As to quaternary structure, interacts with CR2.

It localises to the secreted. Its function is as follows. Produced by macrophages, IFN-alpha have antiviral activities. Interferon stimulates the production of two enzymes: a protein kinase and an oligoadenylate synthetase. This is Interferon alpha-1 from Equus caballus (Horse).